The primary structure comprises 578 residues: Longifolene synthase (578 aa).

Mg(2+) is bound by residues D331, D335, and D475. The DDXXD motif motif lies at 331–335 (DDLYD).

This sequence belongs to the terpene synthase family. Tpsd subfamily. Mg(2+) serves as cofactor. Mn(2+) is required as a cofactor.

It is found in the cytoplasm. The enzyme catalyses (2E,6E)-farnesyl diphosphate = longifolene + diphosphate. Its pathway is sesquiterpene biosynthesis. It functions in the pathway terpene metabolism; oleoresin biosynthesis. Its function is as follows. Involved in defensive oleoresin formation in conifers in response to insect attack or other injury. Involved in sesquiterpene (C15) olefins biosynthesis. Produces mainly longifolene, but also multiple minor products including alpha-longipinene, alpha-longicyclene, E-beta-farnesene, longiborneol, cyclosativene, beta-longipinene, and 12 other sesquiterpenes when used with farnesyl diphosphate (FPP) as substrate. This chain is Longifolene synthase (TPS-Lon), found in Picea abies (Norway spruce).